The primary structure comprises 415 residues: Phosphoglycerate kinase (415 aa).

Residues 24–26, R43, 66–69, R125, and R165 contribute to the substrate site; these read DLN and HLGR. ATP is bound by residues K215, G303, E334, and 363 to 366; that span reads GGDS.

The protein belongs to the phosphoglycerate kinase family. In terms of assembly, monomer.

It is found in the cytoplasm. It carries out the reaction (2R)-3-phosphoglycerate + ATP = (2R)-3-phospho-glyceroyl phosphate + ADP. The protein operates within carbohydrate degradation; glycolysis; pyruvate from D-glyceraldehyde 3-phosphate: step 2/5. The polypeptide is Phosphoglycerate kinase (Mycobacterium avium (strain 104)).